Consider the following 179-residue polypeptide: Large ribosomal subunit protein uL5 (179 aa).

The protein belongs to the universal ribosomal protein uL5 family. Part of the 50S ribosomal subunit; part of the 5S rRNA/L5/L18/L25 subcomplex. Contacts the 5S rRNA and the P site tRNA. Forms a bridge to the 30S subunit in the 70S ribosome.

In terms of biological role, this is one of the proteins that bind and probably mediate the attachment of the 5S RNA into the large ribosomal subunit, where it forms part of the central protuberance. In the 70S ribosome it contacts protein S13 of the 30S subunit (bridge B1b), connecting the 2 subunits; this bridge is implicated in subunit movement. Contacts the P site tRNA; the 5S rRNA and some of its associated proteins might help stabilize positioning of ribosome-bound tRNAs. This Microcystis aeruginosa (strain NIES-843 / IAM M-2473) protein is Large ribosomal subunit protein uL5.